The primary structure comprises 214 residues: Adenylate kinase (214 aa).

Residue 10-15 (GAGKGT) participates in ATP binding. Positions 30–59 (STGDMFRAAIKEGTELGKQAKALMDEGKLV) are NMP. AMP-binding positions include threonine 31, arginine 36, 57-59 (KLV), 85-88 (GFPR), and glutamine 92. Residues 122–159 (GRRVHQPSGRTYHVVYNPPKVEGKDDVTGEDLIIRQDD) form an LID region. Residues arginine 123 and 132–133 (TY) each bind ATP. AMP-binding residues include arginine 156 and arginine 167. Residue lysine 200 participates in ATP binding.

It belongs to the adenylate kinase family. Monomer.

It is found in the cytoplasm. It carries out the reaction AMP + ATP = 2 ADP. It functions in the pathway purine metabolism; AMP biosynthesis via salvage pathway; AMP from ADP: step 1/1. In terms of biological role, catalyzes the reversible transfer of the terminal phosphate group between ATP and AMP. Plays an important role in cellular energy homeostasis and in adenine nucleotide metabolism. The chain is Adenylate kinase from Actinobacillus pleuropneumoniae serotype 5b (strain L20).